Reading from the N-terminus, the 39-residue chain is Cecropin (39 aa).

It is found in the secreted. In terms of biological role, antibacterial peptide active against Gram-negative bacterium E.coli. Has no activity against Gram-positive bacterium M.luteus. Weakly active against M.luteus. The protein is Cecropin of Calliphora vicina (Blue blowfly).